Reading from the N-terminus, the 312-residue chain is Glyoxylate/hydroxypyruvate reductase A (312 aa).

Residue R227 is part of the active site. The Proton donor role is filled by H275.

It belongs to the D-isomer specific 2-hydroxyacid dehydrogenase family. GhrA subfamily.

It localises to the cytoplasm. It catalyses the reaction glycolate + NADP(+) = glyoxylate + NADPH + H(+). The catalysed reaction is (R)-glycerate + NAD(+) = 3-hydroxypyruvate + NADH + H(+). The enzyme catalyses (R)-glycerate + NADP(+) = 3-hydroxypyruvate + NADPH + H(+). Catalyzes the NADPH-dependent reduction of glyoxylate and hydroxypyruvate into glycolate and glycerate, respectively. The sequence is that of Glyoxylate/hydroxypyruvate reductase A from Salmonella dublin (strain CT_02021853).